A 299-amino-acid polypeptide reads, in one-letter code: Protoheme IX farnesyltransferase (299 aa).

A run of 9 helical transmembrane segments spans residues 25–45, 47–67, 95–115, 119–139, 147–167, 173–193, 218–238, 243–263, and 279–299; these read VVVLMLITSLVGMFLASRAGV, WTVLLFGNLGIGLCAGAAAAV, LAALGFALALAVAGMALLLTF, LAAWLTLASLLGYAVLYTGFL, IVIGGLAGAAPPLLGWVAVSG, PLLLVLIVFTWTPPHFWALAI, LHILLYTLALLAVTLLPYAIH, LYLLCALLLGGRFLHWAWALY, and IRYLFLLFIALLVDHYLPLTL.

Belongs to the UbiA prenyltransferase family. Protoheme IX farnesyltransferase subfamily.

It is found in the cell inner membrane. The enzyme catalyses heme b + (2E,6E)-farnesyl diphosphate + H2O = Fe(II)-heme o + diphosphate. It functions in the pathway porphyrin-containing compound metabolism; heme O biosynthesis; heme O from protoheme: step 1/1. Its function is as follows. Converts heme B (protoheme IX) to heme O by substitution of the vinyl group on carbon 2 of heme B porphyrin ring with a hydroxyethyl farnesyl side group. The chain is Protoheme IX farnesyltransferase from Azotobacter vinelandii (strain DJ / ATCC BAA-1303).